The sequence spans 1009 residues: Lateral signaling target protein 2 homolog (1009 aa).

Disordered regions lie at residues Pro-313 to Leu-460, Ala-497 to Ser-629, and Met-777 to Ala-905. 3 stretches are compositionally biased toward low complexity: residues Ser-327–Gly-348, Gln-364–Ala-398, and Pro-406–Ala-427. Acidic residues predominate over residues Ser-430 to Glu-458. The residue at position 541 (Ser-541) is a Phosphoserine. Positions Ser-544–Glu-558 are enriched in basic and acidic residues. Residues Gln-562–Ser-575 show a composition bias toward low complexity. 2 stretches are compositionally biased toward basic residues: residues Arg-576–Thr-601 and Gln-609–Arg-627. Positions Asn-780–Thr-798 are enriched in low complexity. Ser-807 carries the phosphoserine modification. The segment covering Val-822–Ser-878 has biased composition (low complexity). An FYVE-type zinc finger spans residues Asp-917 to Val-977. Zn(2+) contacts are provided by Cys-923, Cys-926, Cys-939, Cys-942, Cys-947, Cys-950, Cys-969, and Cys-972.

The protein belongs to the lst-2 family.

Negative regulator of epidermal growth factor receptor (EGFR) signaling. The polypeptide is Lateral signaling target protein 2 homolog (Drosophila persimilis (Fruit fly)).